Here is a 432-residue protein sequence, read N- to C-terminus: Metacaspase-1 (432 aa).

2 stretches are compositionally biased toward low complexity: residues Met-1–Gly-14 and Gln-29–Tyr-59. The disordered stretch occupies residues Met-1–Tyr-70. The segment covering Ala-60 to Tyr-70 has biased composition (pro residues). Active-site residues include His-220 and Cys-276.

Belongs to the peptidase C14B family.

The protein localises to the cytoplasm. Its subcellular location is the nucleus. Functionally, mediates cell death (apoptosis) triggered by oxygen stress, salt stress or chronological aging. Regulated cell death can prevent a release of toxic cellular components, thus avoiding necrotic collapse of the colony, and can also provide nutrients for healthy cells. Therefore, regulated cell death in yeast colonies can be as important for their development as are apoptosis and related processes that occur within metazoa. The polypeptide is Metacaspase-1 (MCA1) (Saccharomyces cerevisiae (strain YJM789) (Baker's yeast)).